The following is a 327-amino-acid chain: Vacuolar protein sorting-associated protein 26A (327 aa).

The interval Arg-306–Met-327 is disordered. Residue Ser-315 is modified to Phosphoserine. The span at Pro-316–Met-327 shows a compositional bias: polar residues.

This sequence belongs to the VPS26 family. In terms of assembly, component of the heterotrimeric retromer cargo-selective complex (CSC), also described as vacuolar protein sorting subcomplex (VPS), formed by VPS26 (VPS26A or VPS26B), VPS29 and VPS35. The CSC has a highly elongated structure with VPS26 and VPS29 binding independently at opposite distal ends of VPS35 as central platform. The CSC is believed to associate with variable sorting nexins to form functionally distinct retromer complex variants. The originally described retromer complex (also called SNX-BAR retromer) is a pentamer containing the CSC and a heterodimeric membrane-deforming subcomplex formed between SNX1 or SNX2 and SNX5 or SNX6 (also called SNX-BAR subcomplex); the respective CSC and SNX-BAR subcomplexes associate with low affinity. The CSC associates with SNX3 to form a SNX3-retromer complex. The CSC associates with SNX27, the WASH complex and the SNX-BAR subcomplex to form the SNX27-retromer complex. Interacts with VPS29, VPS35, SNX27, SNX1, SNX2, SNX5, SNX6, SNX3, RAB7A, ECPAS, EHD1, WASHC5, SORL1.

The protein localises to the cytoplasm. Its subcellular location is the endosome membrane. The protein resides in the early endosome. Acts as a component of the retromer cargo-selective complex (CSC). The CSC is believed to be the core functional component of retromer or respective retromer complex variants acting to prevent missorting of selected transmembrane cargo proteins into the lysosomal degradation pathway. The recruitment of the CSC to the endosomal membrane involves RAB7A and SNX3. The SNX-BAR retromer mediates retrograde transport of cargo proteins from endosomes to the trans-Golgi network (TGN) and is involved in endosome-to-plasma membrane transport for cargo protein recycling. The SNX3-retromer mediates the retrograde endosome-to-TGN transport of WLS distinct from the SNX-BAR retromer pathway. The SNX27-retromer is believed to be involved in endosome-to-plasma membrane trafficking and recycling of a broad spectrum of cargo proteins. The CSC complex seems to act as recruitment hub for other proteins, such as the WASH complex and TBC1D5. Required for retrograde transport of lysosomal enzyme receptor IGF2R. Required to regulate transcytosis of the polymeric immunoglobulin receptor (pIgR-pIgA). Required for the endosomal localization of WASHC2 (indicative for the WASH complex). Required for the endosomal localization of TBC1D5. Mediates retromer cargo recognition of SORL1 and is involved in trafficking of SORL1 implicated in sorting and processing of APP. Involved in retromer-independent lysosomal sorting of F2R. Involved in recycling of ADRB2. Acts redundantly with VSP26B in SNX-27 mediated endocytic recycling of SLC2A1/GLUT1. Enhances the affinity of SNX27 for PDZ-binding motifs in cargo proteins. The chain is Vacuolar protein sorting-associated protein 26A (Vps26a) from Rattus norvegicus (Rat).